Reading from the N-terminus, the 1051-residue chain is MASEFGILICDKLKENTLEKTNCDVIITGVGKVGVHEEDGVLGYEWEETNYRLGLCEIENTMSISDFVYKQIRCEGAYPILPHYVTDVIKYGMVIHRNDHQIRVDRDEKSIGKIQIQPYFGDMYFSPEYYPATFIKRESLPISVDTIRGYIGARMRGIEARAGRIREGDGNLLECARRWEKAAYERIENEKALRCVAHETDPTYQILKKQRFGFVYPHYYVLNTNYNPTTVTRTSRINDWLLKEKTQGVVKTAEAFSDNAELKTLAERMEEEELTEDIIRAVIRYGAKYATRSGMREDTLSLQELDRYCDSLTTFVHKKKKDEGDDETARTIIRNQWIKGMPRMDFKKEMKITRGPIANWSFFMSIDAFKRNNKVDINPNHQTWKDHIKEVTDQMNRAQQGNNNKPLKVQIDGVSILTSEKYGTVGHWVDWVVDLIMLAQVKMLIKEYKFKRLNSQNLMSGMNKLVGALRCYAYCLILALYDYYGQDIEGFKKGSNSSAILETVIQMFPNFKQEIQANFGINLNIKDKKTIAIRRATMHSDFSSNEEYGYKFVFGWAARGEEVLSNYGDVLSDEVEELFTKLRKKEHWDKVVEDPESYFIDELYQKNPAEVFYSAGYDTDQNVVIDGKMTEGVTYFSKRFVSYWYRVEKITTKHLEFLTEENRKVAQFDFEDYKPMAIGEMGIHASTYKYESLLLGKNRGQKVNDSIALCNYDLALTNFGVSRRQDCCWISSCSAIELSMRANIIIAIFRRIEDKRYENFAKILSGLTQQQDLYFPTYKHYYLFVLQKVLRDERRIDLNRICTELFDTQRRRGILLSFTALRFWNDSEFLGDALMMNFLHRVVFEMENVDVDYGKKWHPLLVSSEKGLRVIAVDVFNSMMGVSTSGWLPYVERICSESDMRRRLNADELELKRWFFDYYATLPLERRGEPRLSFKYEGLTTWIGSNCGGVRDYVVQLLPMRKSKPGLLCIAYGDDVNVQWVEHELRDFLMHEGSLGLVVISGKMLVNKSKLRVRNLKIYNRGTLDSLFLISGGNYTFGNKFLLSKLMAKAE.

It belongs to the orbivirus VP2 family.

Its subcellular location is the virion. Its function is as follows. The VP2 protein is one of the two proteins (with VP5) which constitute the virus particle outer capsid. It is the major target of the host immunogenic response. The sequence is that of Outer capsid protein VP2 (Segment-2) from African horse sickness virus (AHSV).